Consider the following 335-residue polypeptide: N-acetylglucosaminyl-phosphatidylinositol de-N-acetylase (335 aa).

A helical transmembrane segment spans residues 3–23 (SAFTFLSLAIFPLALFIFWTL). Asparagine 128 and asparagine 153 each carry an N-linked (GlcNAc...) asparagine glycan.

This sequence belongs to the PIGL family.

Its subcellular location is the endoplasmic reticulum membrane. The enzyme catalyses a 6-(N-acetyl-alpha-D-glucosaminyl)-1-(1,2-diacyl-sn-glycero-3-phospho)-1D-myo-inositol + H2O = a 6-(alpha-D-glucosaminyl)-1-(1,2-diacyl-sn-glycero-3-phospho)-1D-myo-inositol + acetate. Its pathway is glycolipid biosynthesis; glycosylphosphatidylinositol-anchor biosynthesis. In terms of biological role, involved in the second step of GPI biosynthesis. De-N-acetylation of N-acetylglucosaminyl-phosphatidylinositol. This chain is N-acetylglucosaminyl-phosphatidylinositol de-N-acetylase, found in Arthroderma benhamiae (strain ATCC MYA-4681 / CBS 112371) (Trichophyton mentagrophytes).